The following is a 424-amino-acid chain: Gamma-glutamyl phosphate reductase (424 aa).

The protein belongs to the gamma-glutamyl phosphate reductase family.

It is found in the cytoplasm. It catalyses the reaction L-glutamate 5-semialdehyde + phosphate + NADP(+) = L-glutamyl 5-phosphate + NADPH + H(+). Its pathway is amino-acid biosynthesis; L-proline biosynthesis; L-glutamate 5-semialdehyde from L-glutamate: step 2/2. Catalyzes the NADPH-dependent reduction of L-glutamate 5-phosphate into L-glutamate 5-semialdehyde and phosphate. The product spontaneously undergoes cyclization to form 1-pyrroline-5-carboxylate. The protein is Gamma-glutamyl phosphate reductase of Halorhodospira halophila (strain DSM 244 / SL1) (Ectothiorhodospira halophila (strain DSM 244 / SL1)).